Reading from the N-terminus, the 682-residue chain is Potassium-transporting ATPase ATP-binding subunit (682 aa).

The next 4 membrane-spanning stretches (helical) occupy residues 34–54 (PVMFIVWIGSLLTTCISIAMA), 62–82 (ALFSAAISGWLWVTVLFANFA), 219–239 (IALTILLIALTIVFLLATATL), and 254–274 (VLVALLVCLIPTTIGGLLSAI). The 4-aspartylphosphate intermediate role is filled by Asp-307. ATP contacts are provided by residues Asp-344, Glu-348, 377–384 (FTAQSRMS), and Lys-395. Residues Asp-518 and Asp-522 each coordinate Mg(2+). 3 helical membrane-spanning segments follow: residues 588–608 (FAIIPAAFAATYPQLNALNIM), 616–636 (AILSAVIFNALIIVFLIPLAL), and 656–676 (IYGLGGLLVPFIGIKVIDLLL).

The protein belongs to the cation transport ATPase (P-type) (TC 3.A.3) family. Type IA subfamily. As to quaternary structure, the system is composed of three essential subunits: KdpA, KdpB and KdpC.

Its subcellular location is the cell inner membrane. It carries out the reaction K(+)(out) + ATP + H2O = K(+)(in) + ADP + phosphate + H(+). Part of the high-affinity ATP-driven potassium transport (or Kdp) system, which catalyzes the hydrolysis of ATP coupled with the electrogenic transport of potassium into the cytoplasm. This subunit is responsible for energy coupling to the transport system and for the release of the potassium ions to the cytoplasm. This is Potassium-transporting ATPase ATP-binding subunit from Shigella boydii serotype 4 (strain Sb227).